A 553-amino-acid chain; its full sequence is HTH-type transcriptional regulator SgrR (553 aa).

Residues 1 to 117 (MPSSRLQQQF…LSQIERRFRQ (117 aa)) enclose the HTH marR-type domain. Residues 26–49 (LQELANVLHCSKRHIRSLLNNMQK) constitute a DNA-binding region (H-T-H motif). The interval 163–494 (EPEADLAHHW…NDLSKEVSQW (332 aa)) is solute-binding.

Activates the small RNA gene sgrS under glucose-phosphate stress conditions as well as yfdZ. Represses its own transcription under both stress and non-stress conditions. Might act as a sensor of the intracellular accumulation of phosphoglucose by binding these molecules in its C-terminal solute-binding domain. In Photorhabdus laumondii subsp. laumondii (strain DSM 15139 / CIP 105565 / TT01) (Photorhabdus luminescens subsp. laumondii), this protein is HTH-type transcriptional regulator SgrR.